The sequence spans 392 residues: Lipid-A-disaccharide synthase (392 aa).

This sequence belongs to the LpxB family.

The catalysed reaction is a lipid X + a UDP-2-N,3-O-bis[(3R)-3-hydroxyacyl]-alpha-D-glucosamine = a lipid A disaccharide + UDP + H(+). The protein operates within bacterial outer membrane biogenesis; LPS lipid A biosynthesis. In terms of biological role, condensation of UDP-2,3-diacylglucosamine and 2,3-diacylglucosamine-1-phosphate to form lipid A disaccharide, a precursor of lipid A, a phosphorylated glycolipid that anchors the lipopolysaccharide to the outer membrane of the cell. In Prochlorococcus marinus (strain MIT 9313), this protein is Lipid-A-disaccharide synthase.